The chain runs to 327 residues: Beta-ketoacyl-[acyl-carrier-protein] synthase III (327 aa).

Residues C112 and H253 contribute to the active site. An ACP-binding region spans residues 254-258 (QANER). N283 is an active-site residue.

The protein belongs to the thiolase-like superfamily. FabH family. As to quaternary structure, homodimer.

The protein resides in the cytoplasm. The enzyme catalyses malonyl-[ACP] + acetyl-CoA + H(+) = 3-oxobutanoyl-[ACP] + CO2 + CoA. It functions in the pathway lipid metabolism; fatty acid biosynthesis. Functionally, catalyzes the condensation reaction of fatty acid synthesis by the addition to an acyl acceptor of two carbons from malonyl-ACP. Catalyzes the first condensation reaction which initiates fatty acid synthesis and may therefore play a role in governing the total rate of fatty acid production. Possesses both acetoacetyl-ACP synthase and acetyl transacylase activities. Its substrate specificity determines the biosynthesis of branched-chain and/or straight-chain of fatty acids. In Chlamydia muridarum (strain MoPn / Nigg), this protein is Beta-ketoacyl-[acyl-carrier-protein] synthase III.